Consider the following 358-residue polypeptide: UDP-N-acetylglucosamine--N-acetylmuramyl-(pentapeptide) pyrophosphoryl-undecaprenol N-acetylglucosamine transferase (358 aa).

Residues 13–15, Arg166, Ser196, and Gln291 contribute to the UDP-N-acetyl-alpha-D-glucosamine site; that span reads TAG.

It belongs to the glycosyltransferase 28 family. MurG subfamily.

The protein resides in the cell membrane. It catalyses the reaction di-trans,octa-cis-undecaprenyl diphospho-N-acetyl-alpha-D-muramoyl-L-alanyl-D-glutamyl-meso-2,6-diaminopimeloyl-D-alanyl-D-alanine + UDP-N-acetyl-alpha-D-glucosamine = di-trans,octa-cis-undecaprenyl diphospho-[N-acetyl-alpha-D-glucosaminyl-(1-&gt;4)]-N-acetyl-alpha-D-muramoyl-L-alanyl-D-glutamyl-meso-2,6-diaminopimeloyl-D-alanyl-D-alanine + UDP + H(+). Its pathway is cell wall biogenesis; peptidoglycan biosynthesis. Cell wall formation. Catalyzes the transfer of a GlcNAc subunit on undecaprenyl-pyrophosphoryl-MurNAc-pentapeptide (lipid intermediate I) to form undecaprenyl-pyrophosphoryl-MurNAc-(pentapeptide)GlcNAc (lipid intermediate II). This chain is UDP-N-acetylglucosamine--N-acetylmuramyl-(pentapeptide) pyrophosphoryl-undecaprenol N-acetylglucosamine transferase, found in Clostridium botulinum (strain Alaska E43 / Type E3).